The sequence spans 100 residues: Aspartyl/glutamyl-tRNA(Asn/Gln) amidotransferase subunit C (100 aa).

It belongs to the GatC family. In terms of assembly, heterotrimer of A, B and C subunits.

It catalyses the reaction L-glutamyl-tRNA(Gln) + L-glutamine + ATP + H2O = L-glutaminyl-tRNA(Gln) + L-glutamate + ADP + phosphate + H(+). The catalysed reaction is L-aspartyl-tRNA(Asn) + L-glutamine + ATP + H2O = L-asparaginyl-tRNA(Asn) + L-glutamate + ADP + phosphate + 2 H(+). Allows the formation of correctly charged Asn-tRNA(Asn) or Gln-tRNA(Gln) through the transamidation of misacylated Asp-tRNA(Asn) or Glu-tRNA(Gln) in organisms which lack either or both of asparaginyl-tRNA or glutaminyl-tRNA synthetases. The reaction takes place in the presence of glutamine and ATP through an activated phospho-Asp-tRNA(Asn) or phospho-Glu-tRNA(Gln). In Streptococcus equi subsp. zooepidemicus (strain MGCS10565), this protein is Aspartyl/glutamyl-tRNA(Asn/Gln) amidotransferase subunit C.